A 640-amino-acid polypeptide reads, in one-letter code: Threonine--tRNA ligase (640 aa).

The TGS domain occupies 1–59 (MKIKVKLPDGKEKEYDRGITPAEIAKELGIKKAIGAVVNGELWDLKRPIENDCELRLVT). The catalytic stretch occupies residues 240–531 (DHRKLGPQLE…LIEHFAGAFP (292 aa)). The Zn(2+) site is built by C332, H383, and H508.

It belongs to the class-II aminoacyl-tRNA synthetase family. In terms of assembly, homodimer. Zn(2+) is required as a cofactor.

It is found in the cytoplasm. It catalyses the reaction tRNA(Thr) + L-threonine + ATP = L-threonyl-tRNA(Thr) + AMP + diphosphate + H(+). Functionally, catalyzes the attachment of threonine to tRNA(Thr) in a two-step reaction: L-threonine is first activated by ATP to form Thr-AMP and then transferred to the acceptor end of tRNA(Thr). Also edits incorrectly charged L-seryl-tRNA(Thr). In Thermotoga maritima (strain ATCC 43589 / DSM 3109 / JCM 10099 / NBRC 100826 / MSB8), this protein is Threonine--tRNA ligase.